Reading from the N-terminus, the 960-residue chain is Lon protease homolog, mitochondrial (960 aa).

Residues 1-56 constitute a mitochondrion transit peptide; the sequence is MYRAGALVLRSATLRRTRFLAAHQNFATISSQRSSVLLAKSLESSIGGAGNQKKFY. Positions 92–352 constitute a Lon N-terminal domain; it reads VPILAINRYP…IALLLIQKEK (261 aa). Positions 195–250 are disordered; the sequence is PKTDTPLNGRRARGKRAGLPPTPPPTPPLSTPTSAPEASATSPEEKEEKKDPERKG. The span at 214-224 shows a compositional bias: pro residues; sequence PPTPPPTPPLS. The span at 225-236 shows a compositional bias: low complexity; the sequence is TPTSAPEASATS. Residues 237–250 are compositionally biased toward basic and acidic residues; it reads PEEKEEKKDPERKG. 505 to 512 provides a ligand contact to ATP; the sequence is GPPGVGKT. Residues 712–748 are disordered; the sequence is EQQPEDEQPAATTAISENSDAEPVSTPSDPPTFTPEK. In terms of domain architecture, Lon proteolytic spans 773–960; it reads VTPPGVIMGL…YDELYEHLFQ (188 aa). Active-site residues include serine 867 and lysine 910.

Belongs to the peptidase S16 family. As to quaternary structure, homohexamer or homoheptamer. Organized in a ring with a central cavity.

It is found in the mitochondrion matrix. It carries out the reaction Hydrolysis of proteins in presence of ATP.. Its function is as follows. ATP-dependent serine protease that mediates the selective degradation of misfolded, unassembled or oxidatively damaged polypeptides as well as certain short-lived regulatory proteins in the mitochondrial matrix. May also have a chaperone function in the assembly of inner membrane protein complexes. Participates in the regulation of mitochondrial gene expression and in the maintenance of the integrity of the mitochondrial genome. Binds to mitochondrial DNA in a site-specific manner. The chain is Lon protease homolog, mitochondrial from Caenorhabditis briggsae.